Reading from the N-terminus, the 126-residue chain is Fluoride-specific ion channel FluC (126 aa).

4 consecutive transmembrane segments (helical) span residues 4–24 (FMLL…RYLI), 35–55 (GFPY…GVLM), 71–91 (IIGL…MDNV), and 104–124 (LNIL…FQLM). 2 residues coordinate Na(+): G78 and T81.

The protein belongs to the fluoride channel Fluc/FEX (TC 1.A.43) family.

The protein localises to the cell inner membrane. It carries out the reaction fluoride(in) = fluoride(out). Na(+) is not transported, but it plays an essential structural role and its presence is essential for fluoride channel function. Fluoride-specific ion channel. Important for reducing fluoride concentration in the cell, thus reducing its toxicity. The chain is Fluoride-specific ion channel FluC from Aliivibrio salmonicida (strain LFI1238) (Vibrio salmonicida (strain LFI1238)).